Consider the following 460-residue polypeptide: Piperamide synthase (460 aa).

A disordered region spans residues 1–23; that stretch reads MASSQLEFNVERKQPELLGPAEP. Catalysis depends on proton acceptor residues His168 and Asp383. Positions 458-460 match the Microbody targeting signal motif; sequence SRM.

Belongs to the plant acyltransferase family. Monomer. As to expression, confined to immature fruits perisperm. Also detectable in roots.

The protein resides in the cytoplasm. The enzyme catalyses piperidine + (E,E)-piperoyl-CoA = piperine + CoA + H(+). Its pathway is aromatic compound metabolism. Involved in the biosynthesis of aromatic piperamides natural products such as piperine (1-piperoyl-piperidine), the pungent principle contributing, together with several terpenoids, to the aromatic properties of black pepper fruits, and displaying numerous pharmacological activities such as antiproliferative, antitumor, antiangiogenesis, antioxidant, antidiabetic, antiobesity, cardioprotective, antimicrobial, antiaging, and immunomodulatory effects. Can use piperidine and benzylamine as acceptors and various CoA-esters with aliphatic and aromatic amines as CoA-donors, including piperoyl-CoA, hexanoyl-CoA and octanoyl-CoA, and, to a lower extent, benzoyl-CoA. Mediates the conversion of piperidine to three piperine isomers in the presence of piperoyl-CoA. Its ability to convert in vitro piperidine to hexanoylpiperidine in the presence of hexanoyl-CoA, and to octanoylpiperidine in the presence of octanoyl-CoA is not confirmed in vivo according to fruits metabolome analysis. The polypeptide is Piperamide synthase (Piper nigrum (Black pepper)).